The following is a 204-amino-acid chain: ATP-dependent Clp protease proteolytic subunit (204 aa).

The Nucleophile role is filled by Ser-102. His-127 is an active-site residue.

It belongs to the peptidase S14 family. As to quaternary structure, fourteen ClpP subunits assemble into 2 heptameric rings which stack back to back to give a disk-like structure with a central cavity, resembling the structure of eukaryotic proteasomes.

The protein localises to the cytoplasm. The catalysed reaction is Hydrolysis of proteins to small peptides in the presence of ATP and magnesium. alpha-casein is the usual test substrate. In the absence of ATP, only oligopeptides shorter than five residues are hydrolyzed (such as succinyl-Leu-Tyr-|-NHMec, and Leu-Tyr-Leu-|-Tyr-Trp, in which cleavage of the -Tyr-|-Leu- and -Tyr-|-Trp bonds also occurs).. In terms of biological role, cleaves peptides in various proteins in a process that requires ATP hydrolysis. Has a chymotrypsin-like activity. Plays a major role in the degradation of misfolded proteins. The sequence is that of ATP-dependent Clp protease proteolytic subunit from Neisseria meningitidis serogroup A / serotype 4A (strain DSM 15465 / Z2491).